A 216-amino-acid polypeptide reads, in one-letter code: GTP cyclohydrolase 1 (216 aa).

Zn(2+) contacts are provided by C109, H112, and C180.

The protein belongs to the GTP cyclohydrolase I family. Toroid-shaped homodecamer, composed of two pentamers of five dimers.

It carries out the reaction GTP + H2O = 7,8-dihydroneopterin 3'-triphosphate + formate + H(+). The protein operates within cofactor biosynthesis; 7,8-dihydroneopterin triphosphate biosynthesis; 7,8-dihydroneopterin triphosphate from GTP: step 1/1. The protein is GTP cyclohydrolase 1 of Wigglesworthia glossinidia brevipalpis.